Reading from the N-terminus, the 551-residue chain is MRAKNHLQTALKAVVADLELPWPDKVSIEPPKDKKFGDLAANIALVLAKPAAMPPRELAARITERLQQKYPEISGVEIAGPGFINVTYAPDFWHRTVHMVEQAGGRFGSVNVGNGRKVQIEYVSANPTGPLHIGHGRGAAIGDSLARMMRFAGFETSTEYYINDAGRQMLLLGASVYYRAKQIKGLDVAEPEEYYRGDYIRDIASEVLGFTPDLLEKPEEEALAVCQKYAVDTIMAGIRQDLADFSVSHDVWFSEKSLVETGAVDKTFDRLRRSGLAYEEDGALWFRTTDFGDDKNRVLKKSNGYLTYFASDIAYHDNKYDRGFDLCVDIWGADHHGYVPRMRAAVQALGKPADSFDVILVQLVNLLRNGEQVAMSTRAGEFETLADVVKEVGADAARFMFLSRKSDSSLDFDLELVKQRSMDNPVYYVQYAHARICSVLRKAAERGTTPETHSDEELLKPLVHADEIDMLRLVDRFEDTVEAAATSLSVHHISYYLQELASALHRFYANHPVLNAPDEQILKARLALLRAVAQVLRNGLDLLGVSAPEAM.

The 'HIGH' region signature appears at 125–135 (ANPTGPLHIGH).

Belongs to the class-I aminoacyl-tRNA synthetase family. In terms of assembly, monomer.

The protein localises to the cytoplasm. It carries out the reaction tRNA(Arg) + L-arginine + ATP = L-arginyl-tRNA(Arg) + AMP + diphosphate. This chain is Arginine--tRNA ligase, found in Oleidesulfovibrio alaskensis (strain ATCC BAA-1058 / DSM 17464 / G20) (Desulfovibrio alaskensis).